Here is a 263-residue protein sequence, read N- to C-terminus: Proliferating cell nuclear antigen (263 aa).

Residues 61–80 (RCDRNLSMGMNLNNMAKMLR) mediate DNA binding.

It belongs to the PCNA family. As to quaternary structure, homotrimer. Interacts with FEN1A. Interacts with POLL. Interacts with RAD/GEN1. Interacts with DJA7 and DJA8. In terms of tissue distribution, expressed in proliferating tissues. Expressed in roots and root apex. Expressed at low levels in young leaves. Not detected in mature leaves. Highly expressed in shoot apical meristem (SAM). Expressed in flag leaves and panicles.

It localises to the nucleus. Functionally, this protein is an auxiliary protein of DNA polymerase delta and is involved in the control of eukaryotic DNA replication by increasing the polymerase's processibility during elongation of the leading strand. The chain is Proliferating cell nuclear antigen from Oryza sativa subsp. japonica (Rice).